The following is a 440-amino-acid chain: tRNA(Ile)-lysidine synthase (440 aa).

19–24 (SGGLDS) contributes to the ATP binding site.

This sequence belongs to the tRNA(Ile)-lysidine synthase family.

Its subcellular location is the cytoplasm. The catalysed reaction is cytidine(34) in tRNA(Ile2) + L-lysine + ATP = lysidine(34) in tRNA(Ile2) + AMP + diphosphate + H(+). Ligates lysine onto the cytidine present at position 34 of the AUA codon-specific tRNA(Ile) that contains the anticodon CAU, in an ATP-dependent manner. Cytidine is converted to lysidine, thus changing the amino acid specificity of the tRNA from methionine to isoleucine. This Buchnera aphidicola subsp. Acyrthosiphon pisum (strain APS) (Acyrthosiphon pisum symbiotic bacterium) protein is tRNA(Ile)-lysidine synthase.